Consider the following 164-residue polypeptide: Ribosome maturation factor RimP (164 aa).

The protein belongs to the RimP family.

It localises to the cytoplasm. Required for maturation of 30S ribosomal subunits. The polypeptide is Ribosome maturation factor RimP (Thermodesulfovibrio yellowstonii (strain ATCC 51303 / DSM 11347 / YP87)).